A 295-amino-acid chain; its full sequence is Bifunctional protein FolD (295 aa).

NADP(+)-binding positions include 163-165 (GRS), serine 188, and isoleucine 229.

This sequence belongs to the tetrahydrofolate dehydrogenase/cyclohydrolase family. Homodimer.

It carries out the reaction (6R)-5,10-methylene-5,6,7,8-tetrahydrofolate + NADP(+) = (6R)-5,10-methenyltetrahydrofolate + NADPH. The enzyme catalyses (6R)-5,10-methenyltetrahydrofolate + H2O = (6R)-10-formyltetrahydrofolate + H(+). It participates in one-carbon metabolism; tetrahydrofolate interconversion. Catalyzes the oxidation of 5,10-methylenetetrahydrofolate to 5,10-methenyltetrahydrofolate and then the hydrolysis of 5,10-methenyltetrahydrofolate to 10-formyltetrahydrofolate. In Hyphomonas neptunium (strain ATCC 15444), this protein is Bifunctional protein FolD.